A 426-amino-acid polypeptide reads, in one-letter code: uncharacterized protein (426 aa).

Positions 23-42 are disordered; sequence ENPRPTNNPSTSHPSDSYST. Positions 26 to 42 are enriched in polar residues; the sequence is RPTNNPSTSHPSDSYST.

Belongs to the serpin family.

This is an uncharacterized protein from Thermococcus kodakarensis (strain ATCC BAA-918 / JCM 12380 / KOD1) (Pyrococcus kodakaraensis (strain KOD1)).